We begin with the raw amino-acid sequence, 392 residues long: Cyclic di-GMP phosphodiesterase RocR (392 aa).

Positions 5–126 constitute a Response regulatory domain; sequence NVLVLEDEPF…RITALLTRYN (122 aa). Asp56 bears the 4-aspartylphosphate mark. The region spanning 140 to 392 is the EAL domain; that stretch reads ELPSVADVVR…QHFLDYCSGS (253 aa). Glu175, Asn233, Glu265, and Asp295 together coordinate Mg(2+). Glu352 acts as the Proton acceptor in catalysis.

Homotetramer. Exhibits a highly unusual tetrameric structure arranged around a single dyad, with the four subunits adopting two distinctly different conformations, with only two active sites accessible for substrate binding. Interacts with RocS1. Requires Mg(2+) as cofactor.

The enzyme catalyses 3',3'-c-di-GMP + H2O = 5'-phosphoguanylyl(3'-&gt;5')guanosine + H(+). Phosphorylation of Asp-56 probably induces local conformational changes in the response regulatory domain. These structural changes are transmitted to the adjacent EAL domain, then the signal is further transmitted down to the active site. The phosphodiesterase activity is inhibited by Ca(2+) and Zn(2+). Phosphodiesterase activity is inhibited by a benzoisothiazolinone derivative that specifically inhibited RocR, but not some other phosphodiesterases. Phosphodiesterase (PDE) that catalyzes the hydrolysis of cyclic diguanylate (c-di-GMP) to 5'-pGpG. Cannot use cyclic AMP or cyclic GMP. Part of the RocSAR two-component regulatory signaling system (also known as the SadARS system), which regulates biofilm maturation, type III secretion and expression of the cup fimbrial-gene cluster. Negatively regulates the expression of cup genes by antagonizing the activity of RocA1. The polypeptide is Cyclic di-GMP phosphodiesterase RocR (Pseudomonas aeruginosa (strain ATCC 15692 / DSM 22644 / CIP 104116 / JCM 14847 / LMG 12228 / 1C / PRS 101 / PAO1)).